The primary structure comprises 100 residues: Small ribosomal subunit protein uS14c (100 aa).

It belongs to the universal ribosomal protein uS14 family. Component of the chloroplast small ribosomal subunit (SSU). Mature 70S chloroplast ribosomes of higher plants consist of a small (30S) and a large (50S) subunit. The 30S small subunit contains 1 molecule of ribosomal RNA (16S rRNA) and 24 different proteins. The 50S large subunit contains 3 rRNA molecules (23S, 5S and 4.5S rRNA) and 33 different proteins.

It is found in the plastid. It localises to the chloroplast. Its function is as follows. Component of the chloroplast ribosome (chloro-ribosome), a dedicated translation machinery responsible for the synthesis of chloroplast genome-encoded proteins, including proteins of the transcription and translation machinery and components of the photosynthetic apparatus. This chain is Small ribosomal subunit protein uS14c, found in Spinacia oleracea (Spinach).